Here is a 453-residue protein sequence, read N- to C-terminus: Acyl-coenzyme A thioesterase 2, mitochondrial (453 aa).

Residues 1–42 constitute a mitochondrion transit peptide; it reads MVASSFAVLRASRLCQQDWKSWARLFVPPPLSTGGRTTWART. K83 is modified (N6-acetyllysine). Catalysis depends on charge relay system residues S273, D365, and H399. K447 is modified (N6-succinyllysine).

Belongs to the C/M/P thioester hydrolase family. As to quaternary structure, monomer. Highly expressed in brown and white adipose tissue, muscle, heart, kidney, lung, adrenal gland and spleen; weakly expressed in intestine, testis and brain.

It is found in the mitochondrion matrix. The catalysed reaction is hexadecanoyl-CoA + H2O = hexadecanoate + CoA + H(+). It catalyses the reaction tetradecanoyl-CoA + H2O = tetradecanoate + CoA + H(+). The enzyme catalyses octadecanoyl-CoA + H2O = octadecanoate + CoA + H(+). It carries out the reaction eicosanoyl-CoA + H2O = eicosanoate + CoA + H(+). The catalysed reaction is decanoyl-CoA + H2O = decanoate + CoA + H(+). It catalyses the reaction dodecanoyl-CoA + H2O = dodecanoate + CoA + H(+). The enzyme catalyses (9Z)-octadecenoyl-CoA + H2O = (9Z)-octadecenoate + CoA + H(+). It carries out the reaction (9Z)-hexadecenoyl-CoA + H2O = (9Z)-hexadecenoate + CoA + H(+). The catalysed reaction is (9E)-octadecenoyl-CoA + H2O = (9E)-octadecenoate + CoA + H(+). It catalyses the reaction (9Z,12Z)-octadecadienoyl-CoA + H2O = (9Z,12Z)-octadecadienoate + CoA + H(+). Its pathway is lipid metabolism; fatty acid metabolism. In terms of biological role, catalyzes the hydrolysis of acyl-CoAs into free fatty acids and coenzyme A (CoASH), regulating their respective intracellular levels. Displays higher activity toward long chain acyl CoAs (C14-C20). The enzyme is involved in enhancing the hepatic fatty acid oxidation in mitochondria. The sequence is that of Acyl-coenzyme A thioesterase 2, mitochondrial (Acot2) from Mus musculus (Mouse).